The chain runs to 601 residues: Sestrin homolog (601 aa).

The span at 1–11 (MISMGMTSKGQ) shows a compositional bias: polar residues. The segment at 1 to 58 (MISMGMTSKGQNVDGAPAGNSSSEWIISSSSSPFQANKRYSLDPPFGSDYSPPASPQN) is disordered. N20 carries an N-linked (GlcNAc...) asparagine glycan. Positions 21–32 (SSSEWIISSSSS) are enriched in low complexity. Residues N322 and N330 are each glycosylated (N-linked (GlcNAc...) asparagine). Residues 355–425 (RRSQQQDDDD…DSSSSTLSQS (71 aa)) form a disordered region. Basic and acidic residues predominate over residues 368 to 379 (LHDRQQDFHNAG). Low complexity predominate over residues 380 to 425 (DDSQSSNNNTTTTTTTTTTTTTTTNTNTTSNSAGGGDSSSSTLSQS). N-linked (GlcNAc...) asparagine glycosylation is found at N387, N388, N406, N438, and N499.

Belongs to the sestrin family.

It localises to the nucleus. The protein resides in the cytoplasm. Its function is as follows. May function as a negative feedback regulator of TOR function. This chain is Sestrin homolog, found in Dictyostelium discoideum (Social amoeba).